The chain runs to 129 residues: Small ribosomal subunit protein uS9 (129 aa).

Belongs to the universal ribosomal protein uS9 family.

In Chlorobium phaeobacteroides (strain DSM 266 / SMG 266 / 2430), this protein is Small ribosomal subunit protein uS9.